Consider the following 275-residue polypeptide: Large ribosomal subunit protein uL2 (275 aa).

The disordered stretch occupies residues 222-275 (GVAMNPVDHPHGGGEGRNKGRHPTSPWGQKSKGLKTRHNKRTDNMIIRRRAKKK). Basic and acidic residues predominate over residues 229–239 (DHPHGGGEGRN).

The protein belongs to the universal ribosomal protein uL2 family. As to quaternary structure, part of the 50S ribosomal subunit. Forms a bridge to the 30S subunit in the 70S ribosome.

Its function is as follows. One of the primary rRNA binding proteins. Required for association of the 30S and 50S subunits to form the 70S ribosome, for tRNA binding and peptide bond formation. It has been suggested to have peptidyltransferase activity; this is somewhat controversial. Makes several contacts with the 16S rRNA in the 70S ribosome. In Psychrobacter cryohalolentis (strain ATCC BAA-1226 / DSM 17306 / VKM B-2378 / K5), this protein is Large ribosomal subunit protein uL2.